Here is a 571-residue protein sequence, read N- to C-terminus: UvrABC system protein C (571 aa).

One can recognise a GIY-YIG domain in the interval 15–93 (TSPGVYLWKD…IDRYNPEFNI (79 aa)). In terms of domain architecture, UVR spans 184–219 (NNYINELTNKMHQAANNMQFELALFLRDGLTYLKKL).

The protein belongs to the UvrC family. In terms of assembly, interacts with UvrB in an incision complex.

It localises to the cytoplasm. Its function is as follows. The UvrABC repair system catalyzes the recognition and processing of DNA lesions. UvrC both incises the 5' and 3' sides of the lesion. The N-terminal half is responsible for the 3' incision and the C-terminal half is responsible for the 5' incision. The chain is UvrABC system protein C from Mycoplasmopsis bovis (strain ATCC 25523 / DSM 22781 / NCTC 10131 / PG45) (Mycoplasma bovis).